The chain runs to 277 residues: Energy-coupling factor transporter ATP-binding protein EcfA1 (277 aa).

An ABC transporter domain is found at 4-238 (IETQDLCHTY…PDLLSSVRLD (235 aa)). An ATP-binding site is contributed by 37–44 (GPNGAGKS).

This sequence belongs to the ABC transporter superfamily. Energy-coupling factor EcfA family. As to quaternary structure, forms a stable energy-coupling factor (ECF) transporter complex composed of 2 membrane-embedded substrate-binding proteins (S component), 2 ATP-binding proteins (A component) and 2 transmembrane proteins (T component).

It is found in the cell membrane. Its function is as follows. ATP-binding (A) component of a common energy-coupling factor (ECF) ABC-transporter complex. Unlike classic ABC transporters this ECF transporter provides the energy necessary to transport a number of different substrates. This is Energy-coupling factor transporter ATP-binding protein EcfA1 from Methanospirillum hungatei JF-1 (strain ATCC 27890 / DSM 864 / NBRC 100397 / JF-1).